The following is a 164-amino-acid chain: Phosphopantetheine adenylyltransferase (164 aa).

Threonine 9 serves as a coordination point for substrate. ATP is bound by residues 9-10 (TF) and histidine 17. Substrate contacts are provided by lysine 41, threonine 76, and arginine 90. Residues 91-93 (GLR), glutamate 101, and 126-132 (YQFVSSS) contribute to the ATP site.

The protein belongs to the bacterial CoaD family. As to quaternary structure, homohexamer. Mg(2+) is required as a cofactor.

It is found in the cytoplasm. The enzyme catalyses (R)-4'-phosphopantetheine + ATP + H(+) = 3'-dephospho-CoA + diphosphate. The protein operates within cofactor biosynthesis; coenzyme A biosynthesis; CoA from (R)-pantothenate: step 4/5. In terms of biological role, reversibly transfers an adenylyl group from ATP to 4'-phosphopantetheine, yielding dephospho-CoA (dPCoA) and pyrophosphate. This chain is Phosphopantetheine adenylyltransferase, found in Coprothermobacter proteolyticus (strain ATCC 35245 / DSM 5265 / OCM 4 / BT).